The sequence spans 488 residues: Glutamyl-tRNA(Gln) amidotransferase subunit A (488 aa).

Catalysis depends on charge relay system residues Lys-77 and Ser-152. Ser-176 (acyl-ester intermediate) is an active-site residue.

The protein belongs to the amidase family. GatA subfamily. Heterotrimer of A, B and C subunits.

It carries out the reaction L-glutamyl-tRNA(Gln) + L-glutamine + ATP + H2O = L-glutaminyl-tRNA(Gln) + L-glutamate + ADP + phosphate + H(+). Allows the formation of correctly charged Gln-tRNA(Gln) through the transamidation of misacylated Glu-tRNA(Gln) in organisms which lack glutaminyl-tRNA synthetase. The reaction takes place in the presence of glutamine and ATP through an activated gamma-phospho-Glu-tRNA(Gln). This chain is Glutamyl-tRNA(Gln) amidotransferase subunit A, found in Streptococcus agalactiae serotype Ia (strain ATCC 27591 / A909 / CDC SS700).